Here is a 361-residue protein sequence, read N- to C-terminus: D-alanine--D-alanine ligase (361 aa).

The ATP-grasp domain occupies 134–344; it reads KLLLKSFNIP…FKDLVDNLIN (211 aa). Residue 167–222 participates in ATP binding; that stretch reads REALGYPVIVKPAVLGSSIGINVAYSENQIEFFIEEALKYDLTILIEKFIEAREIE. Asp-297, Glu-311, and Asn-313 together coordinate Mg(2+).

This sequence belongs to the D-alanine--D-alanine ligase family. Requires Mg(2+) as cofactor. It depends on Mn(2+) as a cofactor.

It is found in the cytoplasm. It catalyses the reaction 2 D-alanine + ATP = D-alanyl-D-alanine + ADP + phosphate + H(+). Its pathway is cell wall biogenesis; peptidoglycan biosynthesis. In terms of biological role, cell wall formation. In Borrelia garinii subsp. bavariensis (strain ATCC BAA-2496 / DSM 23469 / PBi) (Borreliella bavariensis), this protein is D-alanine--D-alanine ligase.